Consider the following 156-residue polypeptide: S-ribosylhomocysteine lyase (156 aa).

The Fe cation site is built by histidine 53, histidine 57, and cysteine 122.

It belongs to the LuxS family. As to quaternary structure, homodimer. Fe cation serves as cofactor.

It catalyses the reaction S-(5-deoxy-D-ribos-5-yl)-L-homocysteine = (S)-4,5-dihydroxypentane-2,3-dione + L-homocysteine. Functionally, involved in the synthesis of autoinducer 2 (AI-2) which is secreted by bacteria and is used to communicate both the cell density and the metabolic potential of the environment. The regulation of gene expression in response to changes in cell density is called quorum sensing. Catalyzes the transformation of S-ribosylhomocysteine (RHC) to homocysteine (HC) and 4,5-dihydroxy-2,3-pentadione (DPD). The chain is S-ribosylhomocysteine lyase from Finegoldia magna (strain ATCC 29328 / DSM 20472 / WAL 2508) (Peptostreptococcus magnus).